Reading from the N-terminus, the 343-residue chain is N-acetyl-gamma-glutamyl-phosphate reductase (343 aa).

Residue Cys-147 is part of the active site.

The protein belongs to the NAGSA dehydrogenase family. Type 1 subfamily.

The protein localises to the cytoplasm. The catalysed reaction is N-acetyl-L-glutamate 5-semialdehyde + phosphate + NADP(+) = N-acetyl-L-glutamyl 5-phosphate + NADPH + H(+). Its pathway is amino-acid biosynthesis; L-arginine biosynthesis; N(2)-acetyl-L-ornithine from L-glutamate: step 3/4. Functionally, catalyzes the NADPH-dependent reduction of N-acetyl-5-glutamyl phosphate to yield N-acetyl-L-glutamate 5-semialdehyde. This chain is N-acetyl-gamma-glutamyl-phosphate reductase, found in Listeria innocua serovar 6a (strain ATCC BAA-680 / CLIP 11262).